The following is a 64-amino-acid chain: Prokaryotic ubiquitin-like protein Pup (64 aa).

Positions 1 to 10 are enriched in polar residues; that stretch reads MNQNGSQIHS. Residues 1-32 form a disordered region; that stretch reads MNQNGSQIHSDGNGHSDDTDTPGVSAGQVSVN. Residues 20–58 are ARC ATPase binding; that stretch reads DTPGVSAGQVSVNTAGVDDLLDEIDGLLESNAEEFVRSY. Gln64 is modified (deamidated glutamine). Gln64 is covalently cross-linked (Isoglutamyl lysine isopeptide (Gln-Lys) (interchain with K-? in acceptor proteins)).

Belongs to the prokaryotic ubiquitin-like protein family. As to quaternary structure, strongly interacts with the proteasome-associated ATPase ARC through a hydrophobic interface; the interacting region of Pup lies in its C-terminal half. There is one Pup binding site per ARC hexamer ring. In terms of processing, is modified by deamidation of its C-terminal glutamine to glutamate by the deamidase Dop, a prerequisite to the subsequent pupylation process.

It functions in the pathway protein degradation; proteasomal Pup-dependent pathway. In terms of biological role, protein modifier that is covalently attached to lysine residues of substrate proteins, thereby targeting them for proteasomal degradation. The tagging system is termed pupylation. This Corynebacterium diphtheriae (strain ATCC 700971 / NCTC 13129 / Biotype gravis) protein is Prokaryotic ubiquitin-like protein Pup.